Reading from the N-terminus, the 215-residue chain is Protein C' (215 aa).

A disordered region spans residues 12–34; the sequence is MPSFLKKILKLRGRRQEDESRSR. The segment at 15–22 is involved in self-degradation and in host STAT1 degradation; that stretch reads FLKKILKL.

Belongs to the respirovirus protein C family. In terms of assembly, the different isoforms interact (via C-terminus) with unphosphorylated and phosphorylated human STAT1 (via N-terminus), favoring the formation of parallel STAT1 homodimers. The different isoforms do not interact with host STAT2. C protein interacts with L protein; this interaction has an inhibitory effect on viral transcription and replication. Y1 and Y2 proteins are produced not only by alternative initiation, but also by proteolytic cleavage of C'. Only alternative initiation is detected in vitro, whereas in vivo cleavage seems to be predominant.

The protein resides in the host cytoplasm. In terms of biological role, the different products prevent the establishment of cellular antiviral state by blocking the interferon-alpha/beta (IFN-alpha/beta) and IFN-gamma signaling pathways. They inhibit IFN-alpha/beta induced tyrosine phosphorylation of STAT1 and STAT2. Blocking the IFN-alpha/beta pathway requires binding to STAT1 in the cytoplasm. They inhibit IFN-gamma induced serine phosphorylation of STAT1. Block the IFN-gamma pathway by binding to and stabilizing the parallel form of the STAT1 dimer, further inducing high-molecular-weight complex formation and inhibition of transcription by IFN-gamma. May also have a role in preventing the cell to enter apoptosis. Modulate regulation of viral transcription and replication. Overexpression inhibits the viral RNA polymerase. The absence of all C', C, Y1 and Y2 proteins leads to viral delayed growth. Plays an important role in virion particles release. Modulates virion shape. The chain is Protein C' (P/V/C) from Sendai virus (strain Nagoya) (SeV).